A 404-amino-acid chain; its full sequence is Argininosuccinate synthase (404 aa).

ATP contacts are provided by residues 10–18 (AYSGGVDTS) and Ala38. Tyr89 contributes to the L-citrulline binding site. Residue Gly119 coordinates ATP. L-aspartate contacts are provided by Thr121, Asn125, and Asp126. Asn125 contributes to the L-citrulline binding site. L-citrulline-binding residues include Arg129, Ser177, Ser186, Glu262, and Tyr274.

Belongs to the argininosuccinate synthase family. Type 1 subfamily. In terms of assembly, homotetramer.

The protein resides in the cytoplasm. The enzyme catalyses L-citrulline + L-aspartate + ATP = 2-(N(omega)-L-arginino)succinate + AMP + diphosphate + H(+). The protein operates within amino-acid biosynthesis; L-arginine biosynthesis; L-arginine from L-ornithine and carbamoyl phosphate: step 2/3. This chain is Argininosuccinate synthase, found in Prochlorococcus marinus (strain MIT 9515).